The chain runs to 159 residues: MAIRYIRKIGDPVLRKKAKPVTEINSHIITILEDMAETMYLNDGVGLAANQVGILRRLVVIDVGEGLLELINPEIVYEEGEQIGPEGCLSIPGVFGEVKRPQKVKVRYLDREGNVKEIVGEDLLARALCHEIDHLEGVLFVDKVIRFLDKEELEGVKEV.

C88 and H130 together coordinate Fe cation. The active site involves E131. Residue H134 coordinates Fe cation.

The protein belongs to the polypeptide deformylase family. Fe(2+) is required as a cofactor.

The enzyme catalyses N-terminal N-formyl-L-methionyl-[peptide] + H2O = N-terminal L-methionyl-[peptide] + formate. Its function is as follows. Removes the formyl group from the N-terminal Met of newly synthesized proteins. Requires at least a dipeptide for an efficient rate of reaction. N-terminal L-methionine is a prerequisite for activity but the enzyme has broad specificity at other positions. The sequence is that of Peptide deformylase from Caldanaerobacter subterraneus subsp. tengcongensis (strain DSM 15242 / JCM 11007 / NBRC 100824 / MB4) (Thermoanaerobacter tengcongensis).